A 210-amino-acid polypeptide reads, in one-letter code: Sortase A (210 aa).

Topologically, residues 1-5 (MNKQR) are cytoplasmic. A helical membrane pass occupies residues 6-26 (IYSIVAILLFVVGGVLIGKPF). Residues 27 to 210 (YDGYQAEKKQ…GDLVGTKAKK (184 aa)) lie on the Extracellular side of the membrane. His-126 functions as the Proton donor/acceptor in the catalytic mechanism. Cys-187 serves as the catalytic Acyl-thioester intermediate.

Belongs to the bacterial sortase family. Class A subfamily.

It localises to the cell membrane. Its activity is regulated as follows. Inhibited by thiol-reactive reagents. Transpeptidase that anchors surface proteins to the cell wall. Recognizes and modifies its substrate by proteolytic cleavage of a C-terminal sorting signal. Following cleavage, a covalent intermediate is formed via a thioester bond between the sortase and its substrate, which is then transferred and covalently attached to the cell wall. This sortase recognizes a Leu-Pro-x-Thr-Gly (LPXTG) motif, which is cleaved by the sortase between the threonine and glycine residues. Important for growth in macrophages. May be critical in the early stages of inhalation anthrax. This chain is Sortase A, found in Bacillus anthracis.